Reading from the N-terminus, the 557-residue chain is Formate--tetrahydrofolate ligase 2 (557 aa).

66 to 73 contacts ATP; it reads TPAGEGKT.

It belongs to the formate--tetrahydrofolate ligase family.

It catalyses the reaction (6S)-5,6,7,8-tetrahydrofolate + formate + ATP = (6R)-10-formyltetrahydrofolate + ADP + phosphate. It participates in one-carbon metabolism; tetrahydrofolate interconversion. This Streptococcus pyogenes serotype M4 (strain MGAS10750) protein is Formate--tetrahydrofolate ligase 2.